We begin with the raw amino-acid sequence, 510 residues long: Sulfoquinovosyl transferase SQD2 (510 aa).

The transit peptide at 1 to 83 directs the protein to the chloroplast; that stretch reads MTTLSSINLS…SNDMTITQVR (83 aa). The residue at position 88 (serine 88) is a Phosphoserine. Residues 198-218 form a helical membrane-spanning segment; it reads PGVMVFGALAIAKMLSVPIVM.

The protein belongs to the glycosyltransferase group 1 family. Glycosyltransferase 4 subfamily.

The protein resides in the plastid. It localises to the chloroplast membrane. It catalyses the reaction UDP-alpha-D-6-sulfoquinovose + a 1,2-diacyl-sn-glycerol = a 6-sulfo-alpha-D-quinovosyldiacylglycerol + UDP + H(+). The protein operates within glycolipid biosynthesis. In terms of biological role, catalyzes the transfer of the sulfoquinovose moiety from UDP-sulfoquinovose to diacylglycerol during sulfolipid biosynthesis. Sulfolipid contributes to maintaining a negatively charged lipid-water interface, a requirement for proper function of photosynthetic membranes. Sulfolipid may also function as a substitute of anionic phospholipids under phosphate-limited growth conditions. This Arabidopsis thaliana (Mouse-ear cress) protein is Sulfoquinovosyl transferase SQD2.